The sequence spans 131 residues: MSMQDPIADMLTRIRNGQAANKVGVTMPSSKLKVAIAEVLKEEGFINSFTVEGDITNPTLVIILKYYQGKPVVERIDRISCPSLRIYKKRDALPKVMGGMGIAIISTSKGVITDRAARQAGLGGEVICYVA.

It belongs to the universal ribosomal protein uS8 family. As to quaternary structure, part of the 30S ribosomal subunit. Contacts proteins S5 and S12.

Its function is as follows. One of the primary rRNA binding proteins, it binds directly to 16S rRNA central domain where it helps coordinate assembly of the platform of the 30S subunit. The polypeptide is Small ribosomal subunit protein uS8 (Hamiltonella defensa subsp. Acyrthosiphon pisum (strain 5AT)).